Here is a 120-residue protein sequence, read N- to C-terminus: Lysozyme (120 aa).

The C-type lysozyme domain occupies 1–120 (KRFTRCGLVN…NHSNPDISSC (120 aa)). 4 disulfide bridges follow: Cys-6–Cys-120, Cys-27–Cys-110, Cys-62–Cys-76, and Cys-72–Cys-90. Residues Glu-32 and Asp-50 contribute to the active site.

This sequence belongs to the glycosyl hydrolase 22 family. In terms of assembly, monomer.

It carries out the reaction Hydrolysis of (1-&gt;4)-beta-linkages between N-acetylmuramic acid and N-acetyl-D-glucosamine residues in a peptidoglycan and between N-acetyl-D-glucosamine residues in chitodextrins.. Lysozymes have primarily a bacteriolytic function; those in tissues and body fluids are associated with the monocyte-macrophage system and enhance the activity of immunoagents. The polypeptide is Lysozyme (Antheraea mylitta (Tasar silkworm)).